Reading from the N-terminus, the 444-residue chain is ATP-dependent protease ATPase subunit HslU (444 aa).

Residues Ile-18, 60–65, Asp-256, Glu-322, and Arg-394 each bind ATP; that span reads GVGKTE.

This sequence belongs to the ClpX chaperone family. HslU subfamily. In terms of assembly, a double ring-shaped homohexamer of HslV is capped on each side by a ring-shaped HslU homohexamer. The assembly of the HslU/HslV complex is dependent on binding of ATP.

It localises to the cytoplasm. Its function is as follows. ATPase subunit of a proteasome-like degradation complex; this subunit has chaperone activity. The binding of ATP and its subsequent hydrolysis by HslU are essential for unfolding of protein substrates subsequently hydrolyzed by HslV. HslU recognizes the N-terminal part of its protein substrates and unfolds these before they are guided to HslV for hydrolysis. The sequence is that of ATP-dependent protease ATPase subunit HslU from Serratia proteamaculans (strain 568).